We begin with the raw amino-acid sequence, 134 residues long: Large ribosomal subunit protein bL20 (134 aa).

Belongs to the bacterial ribosomal protein bL20 family.

Binds directly to 23S ribosomal RNA and is necessary for the in vitro assembly process of the 50S ribosomal subunit. It is not involved in the protein synthesizing functions of that subunit. This chain is Large ribosomal subunit protein bL20, found in Allorhizobium ampelinum (strain ATCC BAA-846 / DSM 112012 / S4) (Agrobacterium vitis (strain S4)).